A 507-amino-acid chain; its full sequence is MSSLANKAKSKGKSSKSKSNVNTQVDELSDSIGLVVRVMTAVVDIKFDGGKVPKILNALESKKFYNGKKLVLEVSQHISDNIVRCIALDSTDGLSRNDEFIDTRAPISVPVGRGTLGRVFDVLGNTIDDCGPLEESKYIIKPIYSEIPKLTDQKIATEILVTGIKVIDLLAPYLKGGKVGLFGGAGVGKTVLIMELIHNIAKAHRGVSVFAGVGERTREGNDLYHEMIESGVINLNEKDQSQAVLVYGQMNEPPGARLRVALSALTMAEYFRDSENQDVLFFVDNIFRFTQSGSEISALLGRIPSAVGYQPTLAAEMGAMQERITSTNNGSITSVQAIYVPADDLTDPAPATSFAHLDSTTVLSRQISELGIYPAVDPLDSTSQALSADIVGEEHYEVAKEVQRILQTYKSLQDIIAILGMDELSEDDKLIVARARKIQRFLSQPFHVAEVFTGSPGKFVSLEDTVSSFKGLVEGKYDHLPEAAFYMVGSIDDVIKKAELLQKEGKV.

Residues 1-22 (MSSLANKAKSKGKSSKSKSNVN) form a disordered region. ATP is bound at residue 183–190 (GGAGVGKT).

Belongs to the ATPase alpha/beta chains family. In terms of assembly, F-type ATPases have 2 components, CF(1) - the catalytic core - and CF(0) - the membrane proton channel. CF(1) has five subunits: alpha(3), beta(3), gamma(1), delta(1), epsilon(1). CF(0) has three main subunits: a(1), b(2) and c(9-12). The alpha and beta chains form an alternating ring which encloses part of the gamma chain. CF(1) is attached to CF(0) by a central stalk formed by the gamma and epsilon chains, while a peripheral stalk is formed by the delta and b chains.

The protein resides in the cell inner membrane. It catalyses the reaction ATP + H2O + 4 H(+)(in) = ADP + phosphate + 5 H(+)(out). Produces ATP from ADP in the presence of a proton gradient across the membrane. The catalytic sites are hosted primarily by the beta subunits. The polypeptide is ATP synthase subunit beta (Ehrlichia canis (strain Jake)).